The sequence spans 158 residues: MELSAIGEQVFAVESIRKKRVRKGKVEYLVKWKGWPPKYSTWEPEEHILDPRLVMAYEEKEERDRASGYRKRGPKPRRLLLQESAAPDVVQTPGDWEPMEQAPEEEAEADLTNGPPPWTPTLPSSEVTVTDITANSVTVTFREAQAAEGFFRDRNEKL.

Positions 11 to 69 (FAVESIRKKRVRKGKVEYLVKWKGWPPKYSTWEPEEHILDPRLVMAYEEKEERDRASGY) constitute a Chromo domain. A disordered region spans residues 60 to 127 (KEERDRASGY…WTPTLPSSEV (68 aa)). Basic residues predominate over residues 68-78 (GYRKRGPKPRR).

Component of a PRC1-like complex. Distinct PRC1-like core complexes are composed of a RING1 subunit (RING1B or RING1A), one of the six PCGF proteins (PCGF1-6), one PHC protein (PHC1-3) and one of the CBX proteins (CBX2, CBX4, CBX6, CBX7 or CBX8). The composition of the PRC1 complex may differ between the PRC1 complex in pluripotent embryonic stem cells containing RNF2, CBX7 and PCGF2, and the PRC1 complex in differentiating cells containing RNF2, CBX2, CBX4 and BMI1. Interacts with RING1. Interacts with RNF2, PHC1 and PCGF2. Interacts (via chromodomain) with histone H3K9Me3 and H3K27me3. Interacts with H3K9Me2 and H4K20Me1. Interacts (via chromodomain) with single-stranded and double-stranded RNA; RNA binding seems to be required for the localization to chromatin. Interacts with PCGF1, PCGF3, PCGF5 and PCGF6. As to expression, expressed in embryonic stem cells.

It localises to the nucleus. The protein resides in the chromosome. Its function is as follows. Component of a Polycomb group (PcG) multiprotein PRC1-like complex, a complex class required to maintain the transcriptionally repressive state of many genes, including Hox genes, throughout development. PcG PRC1 complex acts via chromatin remodeling and modification of histones; it mediates monoubiquitination of histone H2A 'Lys-119', rendering chromatin heritably changed in its expressibility. Promotes histone H3 trimethylation at 'Lys-9' (H3K9me3). Binds to histone H3 trimethylated at 'Lys-9' (H3K9me3) or at 'Lys-27' (H3K27me3). Trimethylation at 'Lys-27' (H3K27me3) is important for chromatin recruitment. May possibly also bind trimethylated lysine residues in other proteins (in vitro). Binds non-coding, single-stranded RNA and double-stranded RNA. Plays a role in the timely repression of differentiation-specific genes in pluripotent embryonic stem cells to maintain the undifferentiated state. Regulator of cellular lifespan by maintaining the repression of CDKN2A, but not by inducing telomerase activity. The protein is Chromobox protein homolog 7 (Cbx7) of Mus musculus (Mouse).